Reading from the N-terminus, the 396-residue chain is Protein TOC75-4, chloroplastic (396 aa).

The Chloroplast intermembrane portion of the chain corresponds to 1-23; that stretch reads MEAVKEAVRKIKSLVIPHADEKD. A beta stranded transmembrane segment spans residues 24–32; the sequence is NGIVFEIKL. The Cytoplasmic portion of the chain corresponds to 33–87; it reads NETDQRVEKWGLDPSLDFFEVTGNCNLGRPNSEGSNQSLMGSVTIRNIFNPKLDD. A beta stranded transmembrane segment spans residues 88–96; it reads LLSKIEYVR. Residues 97-140 lie on the Chloroplast intermembrane side of the membrane; it reads FLEAVKKPRNRTFKTSFFNSRKLSPVFTGGPGYEDLVPPMFVGR. Residues 141-148 traverse the membrane as a beta stranded segment; sequence DCLKATIT. The Cytoplasmic portion of the chain corresponds to 149-156; sequence ENLTRQRE. The chain crosses the membrane as a beta stranded span at residues 157–164; that stretch reads LTYGVMFE. Topologically, residues 165–271 are chloroplast intermembrane; the sequence is EIITRDENRR…VEEGSDKPQP (107 aa). Residues 272–280 traverse the membrane as a beta stranded segment; it reads PVLVLHGRY. Residues 281 to 292 are Cytoplasmic-facing; sequence GGCIGDLPSYDV. The chain crosses the membrane as a beta stranded span at residues 293–301; sequence FALGGPNSV. Over 302 to 363 the chain is Chloroplast intermembrane; it reads RGYSMGELGA…LYRKMGHGSS (62 aa). Residues 364–370 form a beta stranded membrane-spanning segment; it reads YGLGVKL. Topologically, residues 371 to 384 are cytoplasmic; it reads GMVRAEYTVRHNRG. Residues 385–392 traverse the membrane as a beta stranded segment; the sequence is TGALFLRF. At 393 to 396 the chain is on the chloroplast intermembrane side; it reads GERY.

This sequence belongs to the TOC75 family. Part of the TOC core complex that includes a protein for the specific recognition of transit peptides surrounded by a ring composed of four proteins forming translocation channels, and four to five GTP-binding proteins providing energy. This core complex can interact with components of the TIC complex to form a larger import complex. Chloroplastic protein precursors also interacts with these complexes. In terms of tissue distribution, expressed ubiquitously at low levels.

The protein localises to the plastid. Its subcellular location is the chloroplast outer membrane. Mediates the insertion of proteins targeted to the outer membrane of chloroplasts. Required for the import of protein precursors into chloroplasts. Forms the voltage-dependent preprotein translocation channels (hydrophilic beta barrel) of the TOC complex in the chloroplastic outer membrane. Required for etioplast formation and/or etioplast-chloroplast transition during deetiolation. The protein is Protein TOC75-4, chloroplastic (TOC75-4) of Arabidopsis thaliana (Mouse-ear cress).